Reading from the N-terminus, the 316-residue chain is 2,3-dihydroxyphenylpropionate/2,3-dihydroxicinnamic acid 1,2-dioxygenase (316 aa).

Catalysis depends on H118, which acts as the Proton donor. Catalysis depends on H182, which acts as the Proton acceptor.

This sequence belongs to the LigB/MhpB extradiol dioxygenase family. Homotetramer. It depends on Fe(2+) as a cofactor.

The enzyme catalyses 3-(2,3-dihydroxyphenyl)propanoate + O2 = (2Z,4E)-2-hydroxy-6-oxonona-2,4-dienedioate + H(+). The catalysed reaction is (2E)-3-(2,3-dihydroxyphenyl)prop-2-enoate + O2 = (2Z,4E,7E)-2-hydroxy-6-oxonona-2,4,7-trienedioate + H(+). Its pathway is aromatic compound metabolism; 3-phenylpropanoate degradation. Catalyzes the non-heme iron(II)-dependent oxidative cleavage of 2,3-dihydroxyphenylpropionic acid and 2,3-dihydroxicinnamic acid into 2-hydroxy-6-ketononadienedioate and 2-hydroxy-6-ketononatrienedioate, respectively. This chain is 2,3-dihydroxyphenylpropionate/2,3-dihydroxicinnamic acid 1,2-dioxygenase, found in Mycolicibacterium vanbaalenii (strain DSM 7251 / JCM 13017 / BCRC 16820 / KCTC 9966 / NRRL B-24157 / PYR-1) (Mycobacterium vanbaalenii).